Here is a 217-residue protein sequence, read N- to C-terminus: Ras-related protein Rab-19 (217 aa).

GTP-binding residues include Ser-26, Val-28, Gly-29, Lys-30, Thr-31, Cys-32, Tyr-42, Ser-43, Glu-44, Ser-45, and Thr-49. A Mg(2+)-binding site is contributed by Thr-31. A Switch 1 motif is present at residues 39–54; it reads SGVYSESQQNTIGVDF. 2 residues coordinate Mg(2+): Thr-49 and Asp-72. A Switch 2 motif is present at residues 74 to 89; that stretch reads AGQERFRTITQSYYRS. GTP-binding residues include Gly-75, Asn-130, Lys-131, Asp-133, Ser-161, Ala-162, and Lys-163. S-geranylgeranyl cysteine attachment occurs at residues Cys-215 and Cys-217. Residue Cys-217 is modified to Cysteine methyl ester.

The protein belongs to the small GTPase superfamily. Rab family. It depends on Mg(2+) as a cofactor.

The protein resides in the cell membrane. The enzyme catalyses GTP + H2O = GDP + phosphate + H(+). Regulated by guanine nucleotide exchange factors (GEFs) which promote the exchange of bound GDP for free GTP. Regulated by GTPase activating proteins (GAPs) which increase the GTP hydrolysis activity. Inhibited by GDP dissociation inhibitors (GDIs). Its function is as follows. The small GTPases Rab are key regulators of intracellular membrane trafficking, from the formation of transport vesicles to their fusion with membranes. Rabs cycle between an inactive GDP-bound form and an active GTP-bound form that is able to recruit to membranes different set of downstream effectors directly responsible for vesicle formation, movement, tethering and fusion. This is Ras-related protein Rab-19 from Rattus norvegicus (Rat).